A 467-amino-acid chain; its full sequence is Serine/threonine-protein phosphatase 2A 56 kDa regulatory subunit epsilon isoform (467 aa).

Residues 1 to 40 (MSSAPTTPPSVDKVDGFSRKSVRKARQKRSQSSSQFRSQG) form a disordered region. Ser-2 bears the N-acetylserine mark. At Thr-7 the chain carries Phosphothreonine. Basic residues predominate over residues 20-29 (KSVRKARQKR). 3 positions are modified to phosphoserine: Ser-30, Ser-32, and Ser-34. Residues 30 to 40 (SQSSSQFRSQG) are compositionally biased toward low complexity.

It belongs to the phosphatase 2A regulatory subunit B56 family. Found in a complex with at least ARL2, PPP2CB; PPP2R1A, PPP2R2A, PPP2R5E and TBCD. PP2A consists of a common heterodimeric core enzyme, composed of a 36 kDa catalytic subunit (subunit C) and a 65 kDa constant regulatory subunit (PR65 or subunit A), that associates with a variety of regulatory subunits. Proteins that associate with the core dimer include three families of regulatory subunits B (the R2/B/PR55/B55, R3/B''/PR72/PR130/PR59 and R5/B'/B56 families), the 48 kDa variable regulatory subunit, viral proteins, and cell signaling molecules. Interacts with SGO1. Post-translationally, phosphorylated on serine residues.

It localises to the cytoplasm. The B regulatory subunit might modulate substrate selectivity and catalytic activity, and might also direct the localization of the catalytic enzyme to a particular subcellular compartment. This Homo sapiens (Human) protein is Serine/threonine-protein phosphatase 2A 56 kDa regulatory subunit epsilon isoform (PPP2R5E).